A 362-amino-acid chain; its full sequence is 4-hydroxythreonine-4-phosphate dehydrogenase (362 aa).

T149 is a binding site for substrate. H184, H229, and H295 together coordinate a divalent metal cation. Positions 303, 312, and 321 each coordinate substrate.

Belongs to the PdxA family. Homodimer. A divalent metal cation serves as cofactor.

The protein localises to the cytoplasm. It catalyses the reaction 4-(phosphooxy)-L-threonine + NAD(+) = 3-amino-2-oxopropyl phosphate + CO2 + NADH. It participates in cofactor biosynthesis; pyridoxine 5'-phosphate biosynthesis; pyridoxine 5'-phosphate from D-erythrose 4-phosphate: step 4/5. Catalyzes the NAD(P)-dependent oxidation of 4-(phosphooxy)-L-threonine (HTP) into 2-amino-3-oxo-4-(phosphooxy)butyric acid which spontaneously decarboxylates to form 3-amino-2-oxopropyl phosphate (AHAP). This chain is 4-hydroxythreonine-4-phosphate dehydrogenase, found in Nostoc sp. (strain PCC 7120 / SAG 25.82 / UTEX 2576).